We begin with the raw amino-acid sequence, 1585 residues long: MSPPISPTPPPLQPPFPPTAIARGPDRPDPPPQHQQAAESLVNAAAQHVAPTCPPTSDELPQMEDQATNSSNDSLIPSRQAPNQEETENAITAGTPPDEMEPTKDAQTVRFSSSSPASYSTHEYPTEEINEPRTSSRAPNTASSQMAESSFDFRSSRDIGSIRMGASALVSALNALPWEEDDDSDDGEDDDEFIEPARGSSSTIYERKQRPQTPSTSHGFHPTHTLHFPFRQNAIARRACQPGTTELDYQYATPETSSRRTSAAGSESSSEGEVPLPKGFVSHPNLIVPSGEGEAAAHPDPKLISDRITKEQQIADVEEQAEILRSAEEQEMRLGKEFVPPKSRDSADLNVDAALREGGSEREDVIEEQMQTNEAEKRLTRNEKLAERLMEVFGLEEREEVLEEMKCWLLRSVMLKGYMYLTKRHICFFANMPNENNLLVKSGPLHKKASRSKLNTKFWVVLKNDVLSWYESTSDPYFPKGNISLQYCHSCDAVSGTRFKVRTSERNYTFTADTESSRDEWVKAIQKVMFKTQHEGETIKLIIPLEAIVDVEKSPTLEFTETIEVKCIDAEDQMSVDSYFFASFPDNDYAFSAIQKLVRERPSPPELPRISSVTTIHANQEPLDTSHATIKRHGTDSSAEKLGMASHRPFRKISSVLKPLILKSSDGEPLEEHSQGPHHNDEDASHLPHIEAISNRRRSEEESDNDYFDGYPPRQVGPPPPSMNDDARNWRPSWIRKPASKLFGSSPSGSFVSHPGRLPTDSSTTVTESGPSLRSRTGRTKQASVTEVIEPPIQYEEEVSEDEMSNKPSVVDSNSAETARKRAARLSWTSETSSGSQMVKSKSDFSMLGSESGHSESAETVRKFRTFFALSDKEELIDHFPGYLYRVLPVSGRFFISTNYFCFRSSQLLYKTKESFRLMIIPIRDLYGLKAQKAFRFGHSGLTVVIKGHEEIFIEFRSASRRKACIALLEERMEAVRLSGENTIVDSHKIEARIMEDLDESTPVEPKSPWPVSPSPLFGSTTSTSFLEFKPEPMKITCLTIGSRGDVQPYIALCKGLQAEGHITKIATHGEYKAWVEGHGIAFESVGGDPAELMQMCVDNGMFTVSFLKEGLQKFRGWLDDLLNSSWEACQGSDLLIESPSAMSGIHVAEALRIPYYRAFTMPWTRTRAYPHAFAVPEHGRGGPYNYMTYTMFDQVFWRAISGQVNRWRRNVLGLDATTFDKMEQHKVPFLYNFSPTVVPPPLDWTEWIHVTGYWFLDKADEKQGEKSWTPPQGLVDFIDKAHGEEKKVVYIGFGSIVVSDPEEMTRCVVEAVVNSGVCAILSKGWSDRGSKKGEPKGDSEGADGVKYPPEIFAIDSIDHGWLFPRIDAACHHGGAGTTGASLRAGIPTIIKPFFGDQAFWAERVESLNVGSSIRRLTSHQLASALIKATTDEKQISKARVVGEMIRKENGITRAIEAIYRDLEYAKSIIKSLPSTDDRTPERISSLLHPLTTADLSFNRVRSRSRSRSRSSQGRFSPRRHTVDDDGWSVVSGGSRSRSGSASAVTSPERRPLNIGSALGSHVFKTALLPNTFGKWRNLEEGDDR.

Residues 1-18 (MSPPISPTPPPLQPPFPP) show a composition bias toward pro residues. Disordered regions lie at residues 1–151 (MSPP…ESSF), 177–225 (PWEE…PTHT), and 249–279 (YQYATPETSSRRTSAAGSESSSEGEVPLPKG). Composition is skewed to polar residues over residues 65 to 92 (DQATNSSNDSLIPSRQAPNQEETENAIT), 105 to 123 (DAQTVRFSSSSPASYSTHE), and 132 to 148 (PRTSSRAPNTASSQMAE). Residues 178–194 (WEEDDDSDDGEDDDEFI) are compositionally biased toward acidic residues. The segment covering 255–273 (ETSSRRTSAAGSESSSEGE) has biased composition (low complexity). In terms of domain architecture, GRAM 1 spans 387–555 (ERLMEVFGLE…EAIVDVEKSP (169 aa)). Residues 438-530 (LLVKSGPLHK…WVKAIQKVMF (93 aa)) enclose the PH domain. Disordered regions lie at residues 625-645 (TSHATIKRHGTDSSAEKLGMA) and 666-852 (DGEP…GSES). A compositionally biased stretch (basic and acidic residues) spans 670 to 689 (LEEHSQGPHHNDEDASHLPH). Polar residues-rich tracts occupy residues 760 to 785 (TDSSTTVTESGPSLRSRTGRTKQASV), 806 to 817 (NKPSVVDSNSAE), and 827 to 840 (SWTSETSSGSQMVK). The GRAM 2 domain occupies 862–933 (RKFRTFFALS…RDLYGLKAQK (72 aa)). The UDP-alpha-D-glucose site is built by serine 1043, arginine 1044, aspartate 1046, isoleucine 1358, histidine 1360, histidine 1373, glycine 1377, threonine 1378, aspartate 1397, and glutamine 1398. The tract at residues 1499 to 1552 (NRVRSRSRSRSRSSQGRFSPRRHTVDDDGWSVVSGGSRSRSGSASAVTSPERRP) is disordered. Positions 1529–1545 (SVVSGGSRSRSGSASAV) are enriched in low complexity.

This sequence belongs to the glycosyltransferase 28 family.

The protein resides in the cytoplasm. It localises to the membrane. The enzyme catalyses a sterol + UDP-alpha-D-glucose = a sterol 3-beta-D-glucoside + UDP + H(+). It carries out the reaction ergosterol + UDP-alpha-D-glucose = ergosteryl 3-beta-D-glucoside + UDP + H(+). Sterol glycosyltransferase responsible for the glycosylation of ergosterol to form ergosterol-glucoside. This chain is Sterol 3-beta-glucosyltransferase, found in Cryptococcus neoformans var. neoformans serotype D (strain B-3501A) (Filobasidiella neoformans).